The chain runs to 312 residues: Olfactory receptor 10D3 (312 aa).

The Extracellular segment spans residues 1 to 26; the sequence is MEVKNCCMVTEFILLGIPHTEGLEMT. Residues 27–47 form a helical membrane-spanning segment; that stretch reads LFVLFLPFYACTLLGNVSILV. Over 48-57 the chain is Cytoplasmic; the sequence is AVMSSARLHT. A helical transmembrane segment spans residues 58-78; that stretch reads PMYFFLGNLSVFDMGFSSVTC. At 79–97 the chain is on the extracellular side; sequence PKMLLYLMGLSRLISYKDC. A disulfide bridge links C97 with C179. Residues 98 to 118 form a helical membrane-spanning segment; the sequence is VCQLFFFHFLGSIECFLFTVM. The Cytoplasmic segment spans residues 119 to 139; the sequence is AYDRFTAICYPLRYTVIMNPR. A helical membrane pass occupies residues 140 to 160; the sequence is ICVALAVGTWLLGCIHSSILT. At 161-197 the chain is on the extracellular side; it reads SLTFTLPYCGPNEVDHFFCDIPALLPLACADTSLAQR. A helical transmembrane segment spans residues 198–218; sequence VSFTNVGLISLVCFLLILLSY. At 219 to 239 the chain is on the cytoplasmic side; that stretch reads TRITISILSIRTTEGRRRAFS. The helical transmembrane segment at 240-260 threads the bilayer; it reads TCSAHLIAILCAYGPIITVYL. Over 261-266 the chain is Extracellular; it reads QPTPNP. The chain crosses the membrane as a helical span at residues 267 to 287; the sequence is MLGTVVQILMNLVGPMLNPLI. At 288-312 the chain is on the cytoplasmic side; that stretch reads YTLRNKEVKTALKTILHRTGHVPES.

This sequence belongs to the G-protein coupled receptor 1 family.

Its subcellular location is the cell membrane. Functionally, odorant receptor. This chain is Olfactory receptor 10D3, found in Homo sapiens (Human).